A 304-amino-acid polypeptide reads, in one-letter code: Putative S-adenosyl-L-methionine-dependent methyltransferase YktD (304 aa).

Residues D134 and D163 to F164 contribute to the S-adenosyl-L-methionine site.

This sequence belongs to the UPF0677 family.

Its function is as follows. May be involved in polyketide synthesis. In Bacillus subtilis (strain 168), this protein is Putative S-adenosyl-L-methionine-dependent methyltransferase YktD (yktD).